The chain runs to 335 residues: Beta-ketoacyl-[acyl-carrier-protein] synthase III 3 (335 aa).

Active-site residues include Cys-114 and His-256. Positions 257-261 (QANHR) are ACP-binding. The active site involves Asn-286.

Belongs to the thiolase-like superfamily. FabH family. In terms of assembly, homodimer.

It localises to the cytoplasm. It catalyses the reaction malonyl-[ACP] + acetyl-CoA + H(+) = 3-oxobutanoyl-[ACP] + CO2 + CoA. It functions in the pathway lipid metabolism; fatty acid biosynthesis. Catalyzes the condensation reaction of fatty acid synthesis by the addition to an acyl acceptor of two carbons from malonyl-ACP. Catalyzes the first condensation reaction which initiates fatty acid synthesis and may therefore play a role in governing the total rate of fatty acid production. Possesses both acetoacetyl-ACP synthase and acetyl transacylase activities. Its substrate specificity determines the biosynthesis of branched-chain and/or straight-chain of fatty acids. This is Beta-ketoacyl-[acyl-carrier-protein] synthase III 3 from Streptomyces coelicolor (strain ATCC BAA-471 / A3(2) / M145).